The sequence spans 214 residues: ATP phosphoribosyltransferase (214 aa).

This sequence belongs to the ATP phosphoribosyltransferase family. Short subfamily. Heteromultimer composed of HisG and HisZ subunits.

The protein localises to the cytoplasm. It carries out the reaction 1-(5-phospho-beta-D-ribosyl)-ATP + diphosphate = 5-phospho-alpha-D-ribose 1-diphosphate + ATP. Its pathway is amino-acid biosynthesis; L-histidine biosynthesis; L-histidine from 5-phospho-alpha-D-ribose 1-diphosphate: step 1/9. In terms of biological role, catalyzes the condensation of ATP and 5-phosphoribose 1-diphosphate to form N'-(5'-phosphoribosyl)-ATP (PR-ATP). Has a crucial role in the pathway because the rate of histidine biosynthesis seems to be controlled primarily by regulation of HisG enzymatic activity. The chain is ATP phosphoribosyltransferase from Alcanivorax borkumensis (strain ATCC 700651 / DSM 11573 / NCIMB 13689 / SK2).